The primary structure comprises 425 residues: Type II secretion system protein L (425 aa).

Residues 1–273 (MKIAGKWKRK…DKAWQNTLLP (273 aa)) are Cytoplasmic-facing. The helical transmembrane segment at 274-290 (WRGVGIAFACYLLLVVA) threads the bilayer. The Periplasmic segment spans residues 291–425 (DAGWAHYQLY…EGRLTLRSQQ (135 aa)).

This sequence belongs to the GSP L family. As to quaternary structure, type II secretion system is composed of four main components: the outer membrane complex, the inner membrane complex, the cytoplasmic secretion ATPase and the periplasm-spanning pseudopilus. Forms homodimers. Interacts with OutM/GspM. Interacts with OutE/GspE and OutF/GspF.

It is found in the cell inner membrane. Inner membrane component of the type II secretion system required for the energy-dependent secretion of extracellular factors such as proteases and toxins from the periplasm. Plays a role in the complex assembly and recruits OutM resulting in a stable complex in the inner membrane. Provides thus a link between the energy-providing OutE protein in the cytoplasm and the rest of the T2SS machinery. The sequence is that of Type II secretion system protein L (outL) from Pectobacterium carotovorum subsp. carotovorum (Erwinia carotovora subsp. carotovora).